Consider the following 517-residue polypeptide: L-amino-acid oxidase (517 aa).

Residues 1 to 18 (MNVFFMFSLLFLAALESC) form the signal peptide. An intrachain disulfide couples cysteine 29 to cysteine 192. FAD contacts are provided by residues 62-63 (MA), 82-83 (EA), arginine 90, and 106-109 (GPMR). Arginine 109 contributes to the substrate binding site. An N-linked (GlcNAc...) asparagine glycan is attached at asparagine 191. Valine 280 is a binding site for FAD. Cysteine 350 and cysteine 431 are disulfide-bonded. The N-linked (GlcNAc...) asparagine glycan is linked to asparagine 380. Tyrosine 391 is a substrate binding site. FAD-binding positions include glutamate 476 and 483-488 (GWLDST). Residue 483–484 (GW) participates in substrate binding.

Belongs to the flavin monoamine oxidase family. FIG1 subfamily. In terms of assembly, homodimer; non-covalently linked. The cofactor is FAD. In terms of processing, N-glycosylated. Expressed by the venom gland.

It is found in the secreted. It catalyses the reaction an L-alpha-amino acid + O2 + H2O = a 2-oxocarboxylate + H2O2 + NH4(+). In terms of biological role, catalyzes an oxidative deamination of predominantly hydrophobic and aromatic L-amino acids, thus producing hydrogen peroxide that may contribute to the diverse toxic effects of this enzyme. Exhibits diverse biological activities, such as hemorrhage, hemolysis, edema, apoptosis of vascular endothelial cells or tumor cell lines, antibacterial and antiparasitic activities, as well as regulation of platelet aggregation. Effects of snake L-amino oxidases on platelets are controversial, since they either induce aggregation or inhibit agonist-induced aggregation. These different effects are probably due to different experimental conditions. The chain is L-amino-acid oxidase from Notechis scutatus scutatus (Mainland tiger snake).